The following is a 968-amino-acid chain: RNA polymerase-associated protein RapA (968 aa).

The region spanning 164–334 is the Helicase ATP-binding domain; the sequence is DVGRRHAPRV…FARLRLLDPN (171 aa). 177–184 is an ATP binding site; sequence DEVGLGKT. The short motif at 280 to 283 is the DEAH box element; sequence DEAH. A Helicase C-terminal domain is found at 490–685; sequence RVEWLMGYLT…ALKAQLEQGR (196 aa).

It belongs to the SNF2/RAD54 helicase family. RapA subfamily. In terms of assembly, interacts with the RNAP. Has a higher affinity for the core RNAP than for the holoenzyme. Its ATPase activity is stimulated by binding to RNAP.

Its function is as follows. Transcription regulator that activates transcription by stimulating RNA polymerase (RNAP) recycling in case of stress conditions such as supercoiled DNA or high salt concentrations. Probably acts by releasing the RNAP, when it is trapped or immobilized on tightly supercoiled DNA. Does not activate transcription on linear DNA. Probably not involved in DNA repair. The protein is RNA polymerase-associated protein RapA of Salmonella paratyphi C (strain RKS4594).